Here is a 760-residue protein sequence, read N- to C-terminus: Probable ubiquitin carboxyl-terminal hydrolase creB (760 aa).

The segment at 1–28 (MGSFLRSFRNNAGSTTPSVGAVPAKKEV) is disordered. Residues 8–18 (FRNNAGSTTPS) are compositionally biased toward polar residues. In terms of domain architecture, USP spans 55–469 (YGMENYGNTC…CAYVLFYQET (415 aa)). Catalysis depends on Cys-64, which acts as the Nucleophile. Disordered regions lie at residues 114 to 146 (AEAQ…DSPD) and 242 to 270 (PAAI…KTPN). Residues 258 to 270 (VDQSASSGSKTPN) show a composition bias toward polar residues. His-420 acts as the Proton acceptor in catalysis. The segment at 520 to 760 (EEHNRPNGLK…LRKKSFSILS (241 aa)) is disordered. A coiled-coil region spans residues 575–635 (KSDVQGKKER…AALEASKASK (61 aa)). Composition is skewed to basic and acidic residues over residues 578–626 (VQGK…ELKA), 635–651 (KAQE…KDKL), and 708–742 (DPKD…ERTG). Basic residues predominate over residues 743–760 (HGKWRSFSLRKKSFSILS).

This sequence belongs to the peptidase C19 family. In terms of assembly, interacts with creA, creC and qutD.

The catalysed reaction is Thiol-dependent hydrolysis of ester, thioester, amide, peptide and isopeptide bonds formed by the C-terminal Gly of ubiquitin (a 76-residue protein attached to proteins as an intracellular targeting signal).. In terms of biological role, ubiquitin thioesterase component of the regulatory network controlling carbon source utilization through ubiquitination and deubiquitination involving creA, creB, creC, creD and acrB. Deubiquitinates the creA catabolic repressor and the quinate permease qutD. Also plays a role in response to carbon starvation and the control of extracellular proteases activity. This chain is Probable ubiquitin carboxyl-terminal hydrolase creB (creB), found in Aspergillus clavatus (strain ATCC 1007 / CBS 513.65 / DSM 816 / NCTC 3887 / NRRL 1 / QM 1276 / 107).